A 214-amino-acid polypeptide reads, in one-letter code: Adenylate kinase (214 aa).

10–15 (GAGKGT) contacts ATP. The NMP stretch occupies residues 30–59 (STGDMLRAAIKAGTELGKQAKAVIDAGQLV). AMP is bound by residues threonine 31, arginine 36, 57-59 (QLV), 85-88 (GFPR), and glutamine 92. An LID region spans residues 122-159 (GRRAHLPSGRTYHVVYNPPKVEGKDDVTGEDLVVRDDD). ATP is bound by residues arginine 123 and 132–133 (TY). Positions 156 and 167 each coordinate AMP. Lysine 200 provides a ligand contact to ATP.

The protein belongs to the adenylate kinase family. Monomer.

Its subcellular location is the cytoplasm. It catalyses the reaction AMP + ATP = 2 ADP. The protein operates within purine metabolism; AMP biosynthesis via salvage pathway; AMP from ADP: step 1/1. Catalyzes the reversible transfer of the terminal phosphate group between ATP and AMP. Plays an important role in cellular energy homeostasis and in adenine nucleotide metabolism. The polypeptide is Adenylate kinase (Vibrio campbellii (strain ATCC BAA-1116)).